Here is a 376-residue protein sequence, read N- to C-terminus: Heat-inducible transcription repressor HrcA (376 aa).

The protein belongs to the HrcA family.

Its function is as follows. Negative regulator of class I heat shock genes (grpE-dnaK-dnaJ and groELS operons). Prevents heat-shock induction of these operons. The protein is Heat-inducible transcription repressor HrcA of Chloroflexus aggregans (strain MD-66 / DSM 9485).